The primary structure comprises 148 residues: UPF0260 protein YE2365 (148 aa).

This sequence belongs to the UPF0260 family.

The chain is UPF0260 protein YE2365 from Yersinia enterocolitica serotype O:8 / biotype 1B (strain NCTC 13174 / 8081).